A 552-amino-acid polypeptide reads, in one-letter code: Protein FAM234A (552 aa).

The segment covering 1–22 has biased composition (basic and acidic residues); that stretch reads MLDHKDLEAEIHPLKNEERKSQ. The disordered stretch occupies residues 1–40; it reads MLDHKDLEAEIHPLKNEERKSQENLGNPSKNEDNVKSAPP. Residues 1-49 are Cytoplasmic-facing; the sequence is MLDHKDLEAEIHPLKNEERKSQENLGNPSKNEDNVKSAPPQSRLSRCRA. A Phosphoserine modification is found at S21. A helical; Signal-anchor for type II membrane protein transmembrane segment spans residues 50-70; sequence AAFFLSLFLCLFVVFVVSFVI. Over 71–552 the chain is Extracellular; the sequence is PCPDRPASQR…FSRLRYQSEA (482 aa). 4 N-linked (GlcNAc...) asparagine glycosylation sites follow: N116, N314, N389, and N473.

It belongs to the FAM234 family.

The protein resides in the membrane. This is Protein FAM234A from Homo sapiens (Human).